The chain runs to 556 residues: Arginine--tRNA ligase (556 aa).

A 'HIGH' region motif is present at residues 133-143 (ANPTGPIHIGH).

This sequence belongs to the class-I aminoacyl-tRNA synthetase family. Monomer.

The protein localises to the cytoplasm. The catalysed reaction is tRNA(Arg) + L-arginine + ATP = L-arginyl-tRNA(Arg) + AMP + diphosphate. The protein is Arginine--tRNA ligase of Dehalococcoides mccartyi (strain ATCC BAA-2100 / JCM 16839 / KCTC 5957 / BAV1).